The following is a 312-amino-acid chain: Nucleosome assembly protein 1-like 4 (312 aa).

Residues 24 to 78 (VETLKNKLQALAEQHVDVLESLAPSVRKRVDVLMEIQSQHDELEVKFFEEKAALE) adopt a coiled-coil conformation. The short motif at 45–60 (LAPSVRKRVDVLMEIQ) is the Nuclear export signal element. The segment at 289–312 (DYGASWVDDEEEDDNNDEYSDEEA) is disordered.

It belongs to the nucleosome assembly protein (NAP) family.

Its subcellular location is the nucleus. The protein localises to the cytoplasm. Its function is as follows. May modulate chromatin structure by regulation of nucleosome assembly/disassembly. The sequence is that of Nucleosome assembly protein 1-like 4 from Oryza sativa subsp. japonica (Rice).